The chain runs to 389 residues: N-terminal EF-hand calcium-binding protein 2 (389 aa).

The residue at position 10 (Arg10) is an Omega-N-methylarginine. An Asymmetric dimethylarginine modification is found at Arg42. EF-hand domains lie at 63–98 and 99–132; these read GGTA…GVLN and EKEL…HMGD. Residues Asp76, Asn78, Asp80, Lys82, Glu87, Asp110, Asp112, Thr114, His116, and Glu121 each contribute to the Ca(2+) site. Residues 173-198 are a coiled coil; that stretch reads LKETANQIQSLLSSVESAVEAIEEQT. Residues 289-377 enclose the ABM domain; it reads QLVRQEMAVC…LSQPEALSQI (89 aa).

In terms of assembly, interacts (calcium-dependent) with ADORA2A and GRM5. In terms of tissue distribution, expressed in the iris, in the ciliary margin of the retina and in the inner portion of the neural retina. Expressed in the spinal dorsal horn with especially strong expression in lamina IIi; found in excitory synaptic boutons (at protein level).

It localises to the cytoplasm. Its subcellular location is the cell projection. The protein resides in the dendrite. The protein localises to the axon. It is found in the cell membrane. Functionally, may act as a signaling scaffold protein that senses intracellular calcium. Can modulate ligand-induced internalization of ADORA2A and coupling efficiency of mGluR5/GRM5; for both receptors may regulate signaling activity such as promoting MAPK1/3 (ERK1/2) activation. This Mus musculus (Mouse) protein is N-terminal EF-hand calcium-binding protein 2 (Necab2).